The primary structure comprises 472 residues: Adenosylhomocysteinase (472 aa).

Substrate contacts are provided by threonine 62, aspartate 137, and glutamate 197. 198-200 (TTT) contributes to the NAD(+) binding site. Substrate is bound by residues lysine 227 and aspartate 231. Residues asparagine 232, 261-266 (GYGDVG), glutamate 284, asparagine 319, 340-342 (IGH), and asparagine 385 contribute to the NAD(+) site.

The protein belongs to the adenosylhomocysteinase family. NAD(+) serves as cofactor.

The protein resides in the cytoplasm. The enzyme catalyses S-adenosyl-L-homocysteine + H2O = L-homocysteine + adenosine. It participates in amino-acid biosynthesis; L-homocysteine biosynthesis; L-homocysteine from S-adenosyl-L-homocysteine: step 1/1. Its function is as follows. May play a key role in the regulation of the intracellular concentration of adenosylhomocysteine. In Bordetella petrii (strain ATCC BAA-461 / DSM 12804 / CCUG 43448), this protein is Adenosylhomocysteinase.